Reading from the N-terminus, the 41-residue chain is Inducible serine protease inhibitor 3 (41 aa).

Its function is as follows. Inhibits trypsin and the toxin proteases PR1 and PR2 of M.anisopliae. Does not inhibit chymotrypsin, subtilisin Carlsberg, proteinase K and porcine pancreatic elastase. The protein is Inducible serine protease inhibitor 3 of Galleria mellonella (Greater wax moth).